The chain runs to 658 residues: Threonine--tRNA ligase (658 aa).

The 64-residue stretch at methionine 1–threonine 64 folds into the TGS domain. A catalytic region spans residues aspartate 246–proline 548. Zn(2+) is bound by residues cysteine 343, histidine 394, and histidine 525.

Belongs to the class-II aminoacyl-tRNA synthetase family. Homodimer. Zn(2+) serves as cofactor.

Its subcellular location is the cytoplasm. It carries out the reaction tRNA(Thr) + L-threonine + ATP = L-threonyl-tRNA(Thr) + AMP + diphosphate + H(+). Catalyzes the attachment of threonine to tRNA(Thr) in a two-step reaction: L-threonine is first activated by ATP to form Thr-AMP and then transferred to the acceptor end of tRNA(Thr). Also edits incorrectly charged L-seryl-tRNA(Thr). This Brucella abortus (strain S19) protein is Threonine--tRNA ligase.